A 687-amino-acid chain; its full sequence is Phenylalanine aminomutase (L-beta-phenylalanine forming) (687 aa).

Y80 (proton donor/acceptor) is an active-site residue. Positions 175-177 (ASG) form a cross-link, 5-imidazolinone (Ala-Gly). Residue S176 is modified to 2,3-didehydroalanine (Ser). Residues N231, Q319, R325, N355, K427, E455, and N458 each contribute to the (E)-cinnamate site.

It belongs to the PAL/histidase family. Homodimer. Homotetramer, dimer of dimers. Post-translationally, contains an active site 4-methylidene-imidazol-5-one (MIO), which is formed autocatalytically by cyclization and dehydration of residues Ala-Ser-Gly.

The protein localises to the cytoplasm. The catalysed reaction is L-phenylalanine = L-beta-phenylalanine. It catalyses the reaction L-phenylalanine = (E)-cinnamate + NH4(+). Its pathway is alkaloid biosynthesis; taxol biosynthesis. It functions in the pathway phenylpropanoid metabolism; trans-cinnamate biosynthesis; trans-cinnamate from L-phenylalanine: step 1/1. In terms of biological role, phenylalanine aminomutase that catalyzes the rearrangement of L-phenylalanine to R-beta-phenylalanine. Catalyzes the first committed step in the biosynthesis of the side chain of the alkaloid taxol (paclitaxel), a widely-used compound with antitumor activity. Also has low phenylalanine ammonia-lyase activity and can catalyze the amination of trans-cinnamate. This chain is Phenylalanine aminomutase (L-beta-phenylalanine forming) (pam), found in Taxus chinensis (Chinese yew).